We begin with the raw amino-acid sequence, 448 residues long: Keratin, type I cytoskeletal 27 (448 aa).

Residues 1–73 (MSVRFSSASR…ANEHGLLSGN (73 aa)) are head. Positions 74 to 109 (EKVTMQNLNDRLASYLENVQALEEANADLEQKIKDW) are coil 1A. The region spanning 74–389 (EKVTMQNLND…RLIDGDEGSC (316 aa)) is the IF rod domain. The interval 110-131 (YEKFGPGSCRGLDHDYSRYFPI) is linker 1. The coil 1B stretch occupies residues 132 to 223 (IDDLRTQIIS…KNHEEEMQAL (92 aa)). Positions 224–246 (QCAAGGNVNVEMNAAPGVDLTVL) are linker 12. Residues 247 to 385 (LNNMRAEYEA…ETYCRLIDGD (139 aa)) are coil 2. Residues 386 to 448 (EGSCVKAKGQ…VNKTEQRIPS (63 aa)) are tail. Residues 427–448 (SRVHTLEEKSTKVNKTEQRIPS) are disordered. The span at 430–448 (HTLEEKSTKVNKTEQRIPS) shows a compositional bias: basic and acidic residues.

The protein belongs to the intermediate filament family. Heterotetramer of two type I and two type II keratins. Interacts with KRT6A to form filaments. In terms of tissue distribution, expressed in skin. Expressed in the Henle layer and cuticle of the irs in hair follicle bulb. In the hair follicle, expression was observed in all layers of the irs but was stronger in the Henle layer and cuticle than the Huxley layer until the Henle layer differentiated (at protein level).

It localises to the cytoplasm. Its function is as follows. Essential for the proper assembly of type I and type II keratin protein complexes and formation of keratin intermediate filaments in the inner root sheath (irs). The chain is Keratin, type I cytoskeletal 27 from Mus musculus (Mouse).